The following is a 279-amino-acid chain: MSIPLLEYAPSSQNQRVEGYEVPNEDTPTIYRLAAAIDDADVDAIIWAGYRQIFSEHLIIKSNRQSFLESQLRNRAINVRDFIRGLGKSEVYRTQVADLNSNYRLVDITLKRFLGRAAYNQDEEIAWSIVIGSQGLHGFIDALLDSDEYRENFGDDIVPYQRRRYKDRPFNLVNPRYNAYWRDRQTLNALGGRSFYSARTSGTLTKDDIRRAIPANFMALAGKILTPERNYQRTIASVTSQIKDIKIPDTSREVTTPEVTVKPVAVALPYRYIPGNKTT.

The 179-residue stretch at 11–189 folds into the PBS-linker domain; that stretch reads SSQNQRVEGY…YWRDRQTLNA (179 aa).

The protein belongs to the phycobilisome linker protein family. As to quaternary structure, part of the phycobilisome, a hemidiscoidal structure that is composed of two distinct substructures: a core complex and a number of rods radiating from the core.

The protein localises to the cellular thylakoid membrane. Functionally, rod-core linker protein required for attachment of phycocyanin to allophycocyanin in cores of phycobilisomes. In terms of biological role, linker polypeptides determine the state of aggregation and the location of the disk-shaped phycobiliprotein units within the phycobilisome and modulate their spectroscopic properties in order to mediate a directed and optimal energy transfer. The chain is Phycobilisome rod-core linker polypeptide CpcG1 from Nostoc sp. (strain PCC 7120 / SAG 25.82 / UTEX 2576).